The chain runs to 141 residues: Nucleoside diphosphate kinase (141 aa).

ATP contacts are provided by Lys11, Phe59, Arg87, Thr93, Arg104, and Asn114. The active-site Pros-phosphohistidine intermediate is His117.

Belongs to the NDK family. Homotetramer. The cofactor is Mg(2+).

The protein localises to the cytoplasm. The catalysed reaction is a 2'-deoxyribonucleoside 5'-diphosphate + ATP = a 2'-deoxyribonucleoside 5'-triphosphate + ADP. It carries out the reaction a ribonucleoside 5'-diphosphate + ATP = a ribonucleoside 5'-triphosphate + ADP. In terms of biological role, major role in the synthesis of nucleoside triphosphates other than ATP. The ATP gamma phosphate is transferred to the NDP beta phosphate via a ping-pong mechanism, using a phosphorylated active-site intermediate. The protein is Nucleoside diphosphate kinase of Photorhabdus laumondii subsp. laumondii (strain DSM 15139 / CIP 105565 / TT01) (Photorhabdus luminescens subsp. laumondii).